The following is a 742-amino-acid chain: MMSNDRKVTEIENSPVTEVRPEEHAWYPDDSALAAPPAATPAAISDQLPSDRYLNRELSWLDFNARVLALAADKSMPLLERAKFLAIFASNLDEFYMVRVAGLKRRDEMGLSVRSADGLTPREQLGRIGEQTQQLASRHARVFLDSVLPALGEEGIYIVTWADLDQAERDRLSTYFNEQVFPVLTPLAVDPAHPFPFVSGLSLNLAVTVRQPEDGTQHFARVKVPDNVDRFVELAAREASEEAAGTEGRTALRFLPMEELIAAFLPVLFPGMEIVEHHAFRITRNADFEVEEDRDEDLLQALERELARRRFGSPVRLEIADDMTESMLELLLRELDVHPGDVIEVPGLLDLSSLWQIYAVDRPTLKDRTFVPATHPAFAERETPKSIFATLREGDVLVHHPYDSFSTSVQRFIEQAAADPNVLAIKQTLYRTSGDSPIVRALIDAAEAGKQVVALVEIKARFDEQANIAWARALEQAGVHVAYGLVGLKTHCKTALVVRREGPTIRRYCHVGTGNYNSKTARLYEDVGLLTAAPDIGADLTDLFNSLTGYSRKLSYRNLLVAPHGIRAGIIDRVEREVAAHRAEGAHNGKGRIRLKMNALVDEQVIDALYRASRAGVRIEVVVRGICALRPGAQGISENIIVRSILGRFLEHSRILHFRAIDEFWIGSADMMHRNLDRRVEVMAQVKNPRLTAQLDELFESALDPCTRCWELGPDGQWTASPQEGHSVRDHQESLMERHRSP.

N91 is an ATP binding site. The Mg(2+) site is built by R431 and R461. Residue H491 is the Phosphohistidine intermediate of the active site. 3 residues coordinate ATP: Y524, R624, and H652. The interval 718 to 742 (WTASPQEGHSVRDHQESLMERHRSP) is disordered. Residues 726–742 (HSVRDHQESLMERHRSP) are compositionally biased toward basic and acidic residues.

Belongs to the polyphosphate kinase 1 (PPK1) family. Mg(2+) is required as a cofactor. In terms of processing, an intermediate of this reaction is the autophosphorylated ppk in which a phosphate is covalently linked to a histidine residue through a N-P bond.

It catalyses the reaction [phosphate](n) + ATP = [phosphate](n+1) + ADP. Catalyzes the reversible transfer of the terminal phosphate of ATP to form a long-chain polyphosphate (polyP). In Mycobacterium bovis (strain ATCC BAA-935 / AF2122/97), this protein is Polyphosphate kinase.